We begin with the raw amino-acid sequence, 255 residues long: Adenylate dimethylallyltransferase (255 aa).

Belongs to the isopentenyl transferase family.

It carries out the reaction dimethylallyl diphosphate + AMP = N(6)-(dimethylallyl)adenosine 5'-phosphate + diphosphate. Transfers dimethylallyl groups to AMP as part of the biosynthesis of cytokinin phytohormones. The polypeptide is Adenylate dimethylallyltransferase (fas4) (Rhodococcoides fascians (Rhodococcus fascians)).